A 492-amino-acid chain; its full sequence is Adenylyltransferase and sulfurtransferase uba4 (492 aa).

ATP-binding positions include glycine 99, aspartate 120, 127–131 (SNLHR), lysine 144, and 188–189 (DN). Residues cysteine 237 and cysteine 240 each coordinate Zn(2+). Cysteine 254 serves as the catalytic Glycyl thioester intermediate; for adenylyltransferase activity. Zn(2+) is bound by residues cysteine 317 and cysteine 320. The Rhodanese domain maps to 378-490 (GSKEPTIIDV…WREQIDPDWP (113 aa)). The Cysteine persulfide intermediate; for sulfurtransferase activity role is filled by cysteine 445.

It in the N-terminal section; belongs to the HesA/MoeB/ThiF family. UBA4 subfamily. Requires Zn(2+) as cofactor.

It is found in the cytoplasm. It localises to the cytosol. It catalyses the reaction [molybdopterin-synthase sulfur-carrier protein]-C-terminal Gly-Gly + ATP + H(+) = [molybdopterin-synthase sulfur-carrier protein]-C-terminal Gly-Gly-AMP + diphosphate. The enzyme catalyses [molybdopterin-synthase sulfur-carrier protein]-C-terminal Gly-Gly-AMP + S-sulfanyl-L-cysteinyl-[cysteine desulfurase] + AH2 = [molybdopterin-synthase sulfur-carrier protein]-C-terminal-Gly-aminoethanethioate + L-cysteinyl-[cysteine desulfurase] + A + AMP + 2 H(+). It functions in the pathway tRNA modification; 5-methoxycarbonylmethyl-2-thiouridine-tRNA biosynthesis. The protein operates within cofactor biosynthesis; molybdopterin biosynthesis. Functionally, plays a central role in 2-thiolation of mcm(5)S(2)U at tRNA wobble positions of cytosolic tRNA(Lys), tRNA(Glu) and tRNA(Gln). Also essential during biosynthesis of the molybdenum cofactor. Acts by mediating the C-terminal thiocarboxylation of sulfur carriers urm1 and mocs2a. Its N-terminus first activates urm1 and mocs2a as acyl-adenylates (-COAMP), then the persulfide sulfur on the catalytic cysteine is transferred to urm1 and mocs2a to form thiocarboxylation (-COSH) of their C-terminus. The reaction probably involves hydrogen sulfide that is generated from the persulfide intermediate and that acts as a nucleophile towards urm1 and mocs2a. Subsequently, a transient disulfide bond is formed. Does not use thiosulfate as sulfur donor; nfs1 probably acting as a sulfur donor for thiocarboxylation reactions. This is Adenylyltransferase and sulfurtransferase uba4 from Aspergillus clavatus (strain ATCC 1007 / CBS 513.65 / DSM 816 / NCTC 3887 / NRRL 1 / QM 1276 / 107).